A 59-amino-acid chain; its full sequence is Large ribosomal subunit protein uL30 (59 aa).

Belongs to the universal ribosomal protein uL30 family. In terms of assembly, part of the 50S ribosomal subunit.

The polypeptide is Large ribosomal subunit protein uL30 (Lactococcus lactis subsp. lactis (strain IL1403) (Streptococcus lactis)).